A 163-amino-acid chain; its full sequence is Putative pre-16S rRNA nuclease (163 aa).

This sequence belongs to the YqgF nuclease family.

It localises to the cytoplasm. Its function is as follows. Could be a nuclease involved in processing of the 5'-end of pre-16S rRNA. This Rhizobium leguminosarum bv. trifolii (strain WSM2304) protein is Putative pre-16S rRNA nuclease.